The sequence spans 312 residues: Iron/alpha-ketoglutarate-dependent dioxygenase penM (312 aa).

3 residues coordinate Fe cation: His134, Asp136, and His211. The tract at residues 287 to 312 (LGLKSEQPLPDGMEKGSMQETDIGGQ) is disordered.

The protein belongs to the PhyH family. As to quaternary structure, homodimer. It depends on Fe cation as a cofactor.

It carries out the reaction (-)-cyclopeptine + 2-oxoglutarate + O2 = (Z)-dehydrocyclopeptine + succinate + CO2 + H2O. It catalyses the reaction (Z)-dehydrocyclopeptine + 2-oxoglutarate + O2 = (-)-cyclopenine + succinate + CO2. The enzyme catalyses (-)-4'-methoxycyclopeptine + 2-oxoglutarate + O2 = (Z)-4'-methoxydehydrocyclopeptine + succinate + CO2 + H2O. The catalysed reaction is (Z)-4'-methoxydehydrocyclopeptine + 2-oxoglutarate + O2 = (-)-4'-methoxycyclopenine + succinate + CO2. Its pathway is secondary metabolite biosynthesis. It functions in the pathway alkaloid biosynthesis. The protein operates within mycotoxin biosynthesis. Functionally, iron/alpha-ketoglutarate-dependent dioxygenase; part of the gene cluster that mediates the biosynthesis of penigequinolones, potent insecticidal alkaloids that contain a highly modified 10-carbon prenyl group. The first stage is catalyzed by the nonribosomal peptide synthetase penN that condenses anthranilic acid and O-methyl-L-tyrosine to produce 4'-methoxycyclopeptin. 4'-methoxycyclopeptin is then converted to 4'-methoxydehydrocyclopeptin by the ketoglutarate-dependent dioxygenase penM through dehydrogenation to form a double bond between C-alpha and C-beta of the O-methyltyrosine side chain. PenM also converts its first product methoxydehydrocyclopeptin to 4'-methoxycyclopenin. The following conversion of 4'methoxycyclopenin into 4'-methoxyviridicatin is catalyzed by the cyclopenase penL. 4'-methoxyviridicatin is the precursor of quinolone natural products, and is further converted to quinolinone B. The prenyltransferase penI then catalyzes the canonical Friedel-Crafts alkylation of quinolinone B with dimethylallyl cation to yield dimethylallyl quinolone, which is subjected to FAD-dependent dehydrogenation by the FAD-linked oxidoreductase penH to yield conjugated aryl diene. The delta(3') double bond then serves as the site of the second alkylation with DMAPP catalyzed by the prenyltransferase penG to yield a carbenium ion intermediate, which can be attacked by H(2)O to yield a styrenyl quinolone containing a C3'-hydroxyprenyl chain, or undergo cyclization to yield yaequinolones J1 and J2. The conversion of the styrenyl quinolone into the tetrahydrofuran-containing yaequinolone C is performed by the FAD-dependent monooxygenase penE and involves epoxidation of the terminal C7'-C8' olefin, followed by epoxide ring opening initiated by the C3' hydroxyl group. The predicted cysteine hydrolase penJ acts as an epoxide hydrolase that enhances the rate of the 5-exo-tet cyclization step, increasing the yield of yaequinolone C. PenF catalyzes the cationic rearrangement of the epoxide formed by penE (before ring opening to produce yaequinolone C) into yaequinolone D. Finally, the short-chain dehydrogenase/reductase (SDR)-like reductase penD, catalyzes both the dehydration of yaequinolone D and the reduction of the resulting oxonium to yield penigequinolone. This Penicillium thymicola protein is Iron/alpha-ketoglutarate-dependent dioxygenase penM.